The primary structure comprises 542 residues: Prolyl 4-hydroxylase subunit alpha-3 (542 aa).

Positions 1 to 24 are cleaved as a signal peptide; it reads MGPGARLALLALLALGGDPAAATG. The stretch at 105 to 129 forms a coiled coil; the sequence is LEATENIRALKDGYEKVEQDLPAFE. The TPR repeat unit spans residues 225 to 258; it reads EDALDYLAFACFQVGNVSCALSLSREFLVYSPDN. The N-linked (GlcNAc...) asparagine glycan is linked to Asn240. The Fe2OG dioxygenase domain occupies 420-527; the sequence is YAEYLQVVNY…KWVANKWIHE (108 aa). Fe cation is bound by residues His438 and Asp440. An N-linked (GlcNAc...) asparagine glycan is attached at Asn480. His508 is a Fe cation binding site. Position 518 (Lys518) interacts with 2-oxoglutarate.

Belongs to the P4HA family. As to quaternary structure, heterotetramer of two alpha-3 chains and two beta chains (the beta chain is the multi-functional PDI). The cofactor is Fe(2+). L-ascorbate is required as a cofactor. In terms of processing, N-glycosylation plays no role in the catalytic activity.

The protein resides in the endoplasmic reticulum lumen. The catalysed reaction is L-prolyl-[collagen] + 2-oxoglutarate + O2 = trans-4-hydroxy-L-prolyl-[collagen] + succinate + CO2. In terms of biological role, catalyzes the post-translational formation of 4-hydroxyproline in -Xaa-Pro-Gly- sequences in collagens and other proteins. The chain is Prolyl 4-hydroxylase subunit alpha-3 (P4ha3) from Mus musculus (Mouse).